The following is a 178-amino-acid chain: ATP synthase subunit delta (178 aa).

This sequence belongs to the ATPase delta chain family. In terms of assembly, F-type ATPases have 2 components, F(1) - the catalytic core - and F(0) - the membrane proton channel. F(1) has five subunits: alpha(3), beta(3), gamma(1), delta(1), epsilon(1). F(0) has three main subunits: a(1), b(2) and c(10-14). The alpha and beta chains form an alternating ring which encloses part of the gamma chain. F(1) is attached to F(0) by a central stalk formed by the gamma and epsilon chains, while a peripheral stalk is formed by the delta and b chains.

It localises to the cell inner membrane. Functionally, f(1)F(0) ATP synthase produces ATP from ADP in the presence of a proton or sodium gradient. F-type ATPases consist of two structural domains, F(1) containing the extramembraneous catalytic core and F(0) containing the membrane proton channel, linked together by a central stalk and a peripheral stalk. During catalysis, ATP synthesis in the catalytic domain of F(1) is coupled via a rotary mechanism of the central stalk subunits to proton translocation. This protein is part of the stalk that links CF(0) to CF(1). It either transmits conformational changes from CF(0) to CF(1) or is implicated in proton conduction. The polypeptide is ATP synthase subunit delta (Chromohalobacter salexigens (strain ATCC BAA-138 / DSM 3043 / CIP 106854 / NCIMB 13768 / 1H11)).